The chain runs to 283 residues: Putative pyruvate, phosphate dikinase regulatory protein (283 aa).

154-161 (GVSRTSKT) contributes to the ADP binding site.

Belongs to the pyruvate, phosphate/water dikinase regulatory protein family. PDRP subfamily.

It carries out the reaction N(tele)-phospho-L-histidyl/L-threonyl-[pyruvate, phosphate dikinase] + ADP = N(tele)-phospho-L-histidyl/O-phospho-L-threonyl-[pyruvate, phosphate dikinase] + AMP + H(+). It catalyses the reaction N(tele)-phospho-L-histidyl/O-phospho-L-threonyl-[pyruvate, phosphate dikinase] + phosphate + H(+) = N(tele)-phospho-L-histidyl/L-threonyl-[pyruvate, phosphate dikinase] + diphosphate. Bifunctional serine/threonine kinase and phosphorylase involved in the regulation of the pyruvate, phosphate dikinase (PPDK) by catalyzing its phosphorylation/dephosphorylation. The polypeptide is Putative pyruvate, phosphate dikinase regulatory protein (Afipia carboxidovorans (strain ATCC 49405 / DSM 1227 / KCTC 32145 / OM5) (Oligotropha carboxidovorans)).